A 108-amino-acid polypeptide reads, in one-letter code: Nucleoid-associated protein BP1550 (108 aa).

A disordered region spans residues 87-108 (SQEKMASVTAGMPLPPGMKLPF). Residues 99–108 (PLPPGMKLPF) show a composition bias toward pro residues.

It belongs to the YbaB/EbfC family. Homodimer.

It is found in the cytoplasm. Its subcellular location is the nucleoid. Binds to DNA and alters its conformation. May be involved in regulation of gene expression, nucleoid organization and DNA protection. This chain is Nucleoid-associated protein BP1550, found in Bordetella pertussis (strain Tohama I / ATCC BAA-589 / NCTC 13251).